The chain runs to 759 residues: Holliday junction resolvase YEN1 (759 aa).

Disordered stretches follow at residues R62 to Y83, S498 to Q518, and K683 to S702. Positions S500–K512 are enriched in low complexity. Phosphoserine occurs at positions 730 and 731.

It belongs to the XPG/RAD2 endonuclease family. GEN subfamily.

The protein localises to the cytoplasm. It is found in the nucleus. Functionally, endonuclease which resolves Holliday junctions by the introduction of symmetrically related cuts across the junction point, to produce nicked duplex products in which the nicks can be readily ligated. Four-way DNA intermediates, also known as Holliday junctions, are formed during homologous recombination and DNA repair, and their resolution is necessary for proper chromosome segregation. Involved in DNA-damage repair in vegetative cells. This Saccharomyces cerevisiae (strain ATCC 204508 / S288c) (Baker's yeast) protein is Holliday junction resolvase YEN1 (YEN1).